Here is a 212-residue protein sequence, read N- to C-terminus: Protein ERP5 (212 aa).

The N-terminal stretch at methionine 1–glycine 20 is a signal peptide. The Lumenal segment spans residues alanine 21 to serine 178. A GOLD domain is found at threonine 31 to isoleucine 124. The N-linked (GlcNAc...) asparagine glycan is linked to asparagine 171. Residues lysine 179–leucine 199 form a helical membrane-spanning segment. Residues arginine 200–valine 212 are Cytoplasmic-facing.

This sequence belongs to the EMP24/GP25L family.

It localises to the endoplasmic reticulum membrane. Involved in vesicular protein trafficking. The chain is Protein ERP5 (ERP5) from Saccharomyces cerevisiae (strain ATCC 204508 / S288c) (Baker's yeast).